The primary structure comprises 316 residues: Ornithine carbamoyltransferase (316 aa).

Carbamoyl phosphate-binding positions include 59-62 (STRT), Gln86, Arg110, and 137-140 (HPCQ). Residues Asn168, Asp232, and 236–237 (SM) contribute to the L-ornithine site. Carbamoyl phosphate contacts are provided by residues 273–274 (CL) and Arg301.

Belongs to the aspartate/ornithine carbamoyltransferase superfamily. OTCase family.

The protein resides in the cytoplasm. It carries out the reaction carbamoyl phosphate + L-ornithine = L-citrulline + phosphate + H(+). It participates in amino-acid biosynthesis; L-arginine biosynthesis; L-arginine from L-ornithine and carbamoyl phosphate: step 1/3. In terms of biological role, reversibly catalyzes the transfer of the carbamoyl group from carbamoyl phosphate (CP) to the N(epsilon) atom of ornithine (ORN) to produce L-citrulline. In Listeria monocytogenes serotype 4b (strain F2365), this protein is Ornithine carbamoyltransferase.